A 319-amino-acid polypeptide reads, in one-letter code: Probable arabinan endo-1,5-alpha-L-arabinosidase C (319 aa).

Residues 1–16 (MFVYTLIFLFLAAANA) form the signal peptide. Aspartate 31 acts as the Proton acceptor in catalysis. N-linked (GlcNAc...) asparagine glycosylation occurs at asparagine 190. Glutamate 198 serves as the catalytic Proton donor. An N-linked (GlcNAc...) asparagine glycan is attached at asparagine 222.

Belongs to the glycosyl hydrolase 43 family.

Its subcellular location is the secreted. It carries out the reaction Endohydrolysis of (1-&gt;5)-alpha-arabinofuranosidic linkages in (1-&gt;5)-arabinans.. Its pathway is glycan metabolism; L-arabinan degradation. Functionally, endo-1,5-alpha-L-arabinanase involved in degradation of pectin. Its preferred substrate is linear 1,5-alpha-L-arabinan. This is Probable arabinan endo-1,5-alpha-L-arabinosidase C (abnC) from Aspergillus clavatus (strain ATCC 1007 / CBS 513.65 / DSM 816 / NCTC 3887 / NRRL 1 / QM 1276 / 107).